Reading from the N-terminus, the 436-residue chain is RNA polymerase sigma-54 factor (436 aa).

Residues 324–343 (TLREVADCLSLHESTVSRAI) constitute a DNA-binding region (H-T-H motif). Positions 413–421 (SRRTVAKYR) match the RPON box motif.

It belongs to the sigma-54 factor family. As to quaternary structure, interacts transiently with the RNAP core.

Sigma factors are initiation factors that promote the attachment of RNA polymerase (RNAP) to specific initiation sites and are then released. This sigma factor is responsible for the expression of the levanase operon. The open complex (sigma-54 and core RNA polymerase) serves as the receptor for receipt of the melting signal from the remotely bound activator protein LevR for the expression of the levanase operon. Associates with the RNAP core only in stationary phase cells. The protein is RNA polymerase sigma-54 factor (sigL) of Bacillus subtilis (strain 168).